Consider the following 171-residue polypeptide: S-ribosylhomocysteine lyase (171 aa).

The Fe cation site is built by His-54, His-58, and Cys-128.

Belongs to the LuxS family. As to quaternary structure, homodimer. Fe cation is required as a cofactor.

It catalyses the reaction S-(5-deoxy-D-ribos-5-yl)-L-homocysteine = (S)-4,5-dihydroxypentane-2,3-dione + L-homocysteine. Involved in the synthesis of autoinducer 2 (AI-2) which is secreted by bacteria and is used to communicate both the cell density and the metabolic potential of the environment. The regulation of gene expression in response to changes in cell density is called quorum sensing. Catalyzes the transformation of S-ribosylhomocysteine (RHC) to homocysteine (HC) and 4,5-dihydroxy-2,3-pentadione (DPD). The sequence is that of S-ribosylhomocysteine lyase from Pectobacterium carotovorum subsp. carotovorum (strain PC1).